The sequence spans 127 residues: Fluoride-specific ion channel FluC (127 aa).

4 helical membrane passes run 8–28 (LLIA…QYWF), 37–57 (PWGT…VYAI), 68–88 (WKFL…TFSY), and 100–120 (ILFL…AFAG). Na(+) contacts are provided by Gly78 and Thr81.

The protein belongs to the fluoride channel Fluc/FEX (TC 1.A.43) family.

It is found in the cell inner membrane. It carries out the reaction fluoride(in) = fluoride(out). Na(+) is not transported, but it plays an essential structural role and its presence is essential for fluoride channel function. Functionally, fluoride-specific ion channel. Important for reducing fluoride concentration in the cell, thus reducing its toxicity. In Leptospira interrogans serogroup Icterohaemorrhagiae serovar copenhageni (strain Fiocruz L1-130), this protein is Fluoride-specific ion channel FluC.